Here is a 95-residue protein sequence, read N- to C-terminus: Embryonic abundant protein 1 (95 aa).

The segment covering Met1–Arg10 has biased composition (polar residues). The interval Met1–Ser95 is disordered. Composition is skewed to basic and acidic residues over residues Ala40–Arg64 and Gly75–Ser95.

The protein belongs to the small hydrophilic plant seed protein family. In terms of tissue distribution, expressed in dry seeds and immature embryos.

Em protein may act as a cytoplasm protectant during desiccation. This chain is Embryonic abundant protein 1 (EMP1), found in Oryza sativa subsp. japonica (Rice).